Reading from the N-terminus, the 533-residue chain is Purine-cytosine permease FCY2 (533 aa).

The Cytoplasmic portion of the chain corresponds to 1–98 (MLEEGNNVYE…NAASMWFSAN (98 aa)). Lys-16 is covalently cross-linked (Glycyl lysine isopeptide (Lys-Gly) (interchain with G-Cter in ubiquitin)). Phosphoserine is present on Ser-18. Residues 99–119 (MVIASYALGALGPMVFGLNFG) form a helical membrane-spanning segment. Residues 120 to 121 (QS) are Extracellular-facing. The chain crosses the membrane as a helical span at residues 122–141 (VLVIIFFNIMGLIFVAFFSV). The Cytoplasmic portion of the chain corresponds to 142 to 198 (FGAELGLRQMILSRYLVGNVTARIFSLINVIACVGWGIVNTSVSAQLLNMVNEGSGH). Residues 165 to 184 (IFSLINVIACVGWGIVNTSV) form a surface seeking region. Residues 199 to 218 (VCPIWAGCLIIIGGTVLVTF) traverse the membrane as a helical segment. The Extracellular portion of the chain corresponds to 219–256 (FGYSVIHAYEKWSWVPNFAVFLVIIAQLSRSGKFKGGE). Residues 257–276 (WVGGATTAGSVLSFGSSIFG) form a helical membrane-spanning segment. At 277-300 (FAAGWTTYAADYTVYMPKSTNKYK) the chain is on the cytoplasmic side. Residues 301–320 (IFFSLVAGLAFPLFFTMILG) form a helical membrane-spanning segment. Residues 321–347 (AASAMAALNDPTWKAYYDKNAMGGVIY) lie on the Extracellular side of the membrane. The helical transmembrane segment at 348–367 (AILVPNSLNGFGQFCCVLLA) threads the bilayer. At 368–398 (LSTIANNIPNMYTVALSAQALWAPLAKIPRV) the chain is on the cytoplasmic side. A helical transmembrane segment spans residues 399-418 (VWTMAGNAATLGISIPATYY). Residues 419 to 465 (FDGFMENFMDSIGYYLAIYIAISCSEHFFYRRSFSAYNIDDWDNWEH) are Extracellular-facing. The helical transmembrane segment at 466 to 485 (LPIGIAGTAALIVGAFGVAL) threads the bilayer. The Cytoplasmic portion of the chain corresponds to 486 to 533 (GMCQTYWVGEIGRLIGKYGGDIGFELGASWAFIIYNILRPLELKYFGR).

The protein belongs to the purine-cytosine permease (2.A.39) family. Post-translationally, not N-glycosylated.

Its subcellular location is the membrane. Functionally, this permease has a broad specificity towards purines, and also transport cytosine and 5-methylcytosine but neither uracil nor thymine. The chain is Purine-cytosine permease FCY2 (FCY2) from Saccharomyces cerevisiae (strain ATCC 204508 / S288c) (Baker's yeast).